The following is a 197-amino-acid chain: ATP-dependent Clp protease proteolytic subunit (197 aa).

Serine 100 acts as the Nucleophile in catalysis. The active site involves histidine 125.

Belongs to the peptidase S14 family. As to quaternary structure, component of the chloroplastic Clp protease core complex.

It is found in the plastid. It localises to the chloroplast stroma. It catalyses the reaction Hydrolysis of proteins to small peptides in the presence of ATP and magnesium. alpha-casein is the usual test substrate. In the absence of ATP, only oligopeptides shorter than five residues are hydrolyzed (such as succinyl-Leu-Tyr-|-NHMec, and Leu-Tyr-Leu-|-Tyr-Trp, in which cleavage of the -Tyr-|-Leu- and -Tyr-|-Trp bonds also occurs).. In terms of biological role, cleaves peptides in various proteins in a process that requires ATP hydrolysis. Has a chymotrypsin-like activity. Plays a major role in the degradation of misfolded proteins. This Angiopteris evecta (Mule's foot fern) protein is ATP-dependent Clp protease proteolytic subunit.